The following is a 484-amino-acid chain: Glutamyl-tRNA(Gln) amidotransferase subunit A (484 aa).

Residues Lys76 and Ser151 each act as charge relay system in the active site. Ser175 serves as the catalytic Acyl-ester intermediate.

This sequence belongs to the amidase family. GatA subfamily. As to quaternary structure, heterotrimer of A, B and C subunits.

The catalysed reaction is L-glutamyl-tRNA(Gln) + L-glutamine + ATP + H2O = L-glutaminyl-tRNA(Gln) + L-glutamate + ADP + phosphate + H(+). Its function is as follows. Allows the formation of correctly charged Gln-tRNA(Gln) through the transamidation of misacylated Glu-tRNA(Gln) in organisms which lack glutaminyl-tRNA synthetase. The reaction takes place in the presence of glutamine and ATP through an activated gamma-phospho-Glu-tRNA(Gln). This Saccharophagus degradans (strain 2-40 / ATCC 43961 / DSM 17024) protein is Glutamyl-tRNA(Gln) amidotransferase subunit A.